Reading from the N-terminus, the 179-residue chain is Large ribosomal subunit protein eL18 (179 aa).

This sequence belongs to the eukaryotic ribosomal protein eL18 family. In terms of assembly, component of the large ribosomal subunit.

It localises to the cytoplasm. It is found in the cytosol. The protein localises to the rough endoplasmic reticulum. Functionally, component of the large ribosomal subunit. The ribosome is a large ribonucleoprotein complex responsible for the synthesis of proteins in the cell. In Salmo salar (Atlantic salmon), this protein is Large ribosomal subunit protein eL18 (rpl18).